The sequence spans 56 residues: MTQVTVGENEGIESALRRFKRQVSKAGIFADLKRLRHHETPIEKYKRKAQQRRRRR.

Belongs to the bacterial ribosomal protein bS21 family.

This is Small ribosomal subunit protein bS21 from Synechococcus sp. (strain WH7803).